The chain runs to 236 residues: Ribonuclease 3 (236 aa).

Residues F8–D130 enclose the RNase III domain. E43 is a binding site for Mg(2+). D47 is an active-site residue. Mg(2+) contacts are provided by D116 and E119. Residue E119 is part of the active site. In terms of domain architecture, DRBM spans D157 to Q227.

The protein belongs to the ribonuclease III family. In terms of assembly, homodimer. The cofactor is Mg(2+).

The protein localises to the cytoplasm. It carries out the reaction Endonucleolytic cleavage to 5'-phosphomonoester.. In terms of biological role, digests double-stranded RNA. Involved in the processing of primary rRNA transcript to yield the immediate precursors to the large and small rRNAs (23S and 16S). Processes some mRNAs, and tRNAs when they are encoded in the rRNA operon. Processes pre-crRNA and tracrRNA of type II CRISPR loci if present in the organism. The sequence is that of Ribonuclease 3 from Chromobacterium violaceum (strain ATCC 12472 / DSM 30191 / JCM 1249 / CCUG 213 / NBRC 12614 / NCIMB 9131 / NCTC 9757 / MK).